The primary structure comprises 153 residues: 6,7-dimethyl-8-ribityllumazine synthase (153 aa).

Residues Phe-22, 56 to 58 (AFE), and 80 to 82 (TVI) contribute to the 5-amino-6-(D-ribitylamino)uracil site. Residue 85–86 (ST) coordinates (2S)-2-hydroxy-3-oxobutyl phosphate. His-88 serves as the catalytic Proton donor. Position 113 (Phe-113) interacts with 5-amino-6-(D-ribitylamino)uracil. Arg-127 provides a ligand contact to (2S)-2-hydroxy-3-oxobutyl phosphate.

This sequence belongs to the DMRL synthase family. In terms of assembly, forms an icosahedral capsid composed of 60 subunits, arranged as a dodecamer of pentamers.

It catalyses the reaction (2S)-2-hydroxy-3-oxobutyl phosphate + 5-amino-6-(D-ribitylamino)uracil = 6,7-dimethyl-8-(1-D-ribityl)lumazine + phosphate + 2 H2O + H(+). Its pathway is cofactor biosynthesis; riboflavin biosynthesis; riboflavin from 2-hydroxy-3-oxobutyl phosphate and 5-amino-6-(D-ribitylamino)uracil: step 1/2. Its function is as follows. Catalyzes the formation of 6,7-dimethyl-8-ribityllumazine by condensation of 5-amino-6-(D-ribitylamino)uracil with 3,4-dihydroxy-2-butanone 4-phosphate. This is the penultimate step in the biosynthesis of riboflavin. This chain is 6,7-dimethyl-8-ribityllumazine synthase, found in Actinobacillus pleuropneumoniae serotype 3 (strain JL03).